Consider the following 200-residue polypeptide: Dephospho-CoA kinase (200 aa).

The DPCK domain maps to 3–200 (IIGLTGGIGS…LWQRFATQVE (198 aa)). Residue 11–16 (GSGKST) participates in ATP binding.

The protein belongs to the CoaE family.

The protein resides in the cytoplasm. It catalyses the reaction 3'-dephospho-CoA + ATP = ADP + CoA + H(+). It functions in the pathway cofactor biosynthesis; coenzyme A biosynthesis; CoA from (R)-pantothenate: step 5/5. Catalyzes the phosphorylation of the 3'-hydroxyl group of dephosphocoenzyme A to form coenzyme A. This Corynebacterium diphtheriae (strain ATCC 700971 / NCTC 13129 / Biotype gravis) protein is Dephospho-CoA kinase.